The sequence spans 510 residues: Serine/threonine-protein kinase UL13 homolog (510 aa).

Residues 1-63 (MDADDTPPNL…WANPSTATCM (63 aa)) are disordered. One can recognise a Protein kinase domain in the interval 132-458 (RDRPRFAGRG…RRIFQCHAVR (327 aa)). ATP contacts are provided by residues 138 to 146 (AGRGTYGRV) and K157. D257 serves as the catalytic Proton acceptor.

The protein belongs to the protein kinase superfamily. Ser/Thr protein kinase family. Autophosphorylated.

It localises to the virion tegument. It is found in the host nucleus. The enzyme catalyses L-seryl-[protein] + ATP = O-phospho-L-seryl-[protein] + ADP + H(+). It carries out the reaction L-threonyl-[protein] + ATP = O-phospho-L-threonyl-[protein] + ADP + H(+). In terms of biological role, multifunctional serine/threonine kinase that plays a role in several processes including egress of virus particles from the nucleus, modulation of the actin cytoskeleton and regulation of viral and cellular gene expression. Regulates the nuclear localization of viral envelopment factor proteins 24 and 27, by phosphorylating the protein kinase ORF66, indicating a role in nuclear egress. Disrupts host nuclear lamins, including LMNA and LMNB1. Phosphorylates the viral Fc receptor composed of glycoproteins E (gE) and I (gI). Phosphorylation of glycoprotein E (gE) by UL13 alters its subcellular localization, from the host early endosome to the plasma membrane. Participates in the transcriptional regulation of cellular and viral mRNAs mainly by phosphorylating the viral transcriptional regulator IE63. The sequence is that of Serine/threonine-protein kinase UL13 homolog from Varicella-zoster virus (strain Dumas) (HHV-3).